A 329-amino-acid chain; its full sequence is Phenylalanine--tRNA ligase alpha subunit (329 aa).

Glu254 contacts Mg(2+).

It belongs to the class-II aminoacyl-tRNA synthetase family. Phe-tRNA synthetase alpha subunit type 1 subfamily. As to quaternary structure, tetramer of two alpha and two beta subunits. Mg(2+) serves as cofactor.

The protein localises to the cytoplasm. It catalyses the reaction tRNA(Phe) + L-phenylalanine + ATP = L-phenylalanyl-tRNA(Phe) + AMP + diphosphate + H(+). This Histophilus somni (strain 2336) (Haemophilus somnus) protein is Phenylalanine--tRNA ligase alpha subunit.